The chain runs to 689 residues: Protein SDA1 homolog (689 aa).

Residues 254–319 (KKNTKNKKKL…RFEVKLMHMD (66 aa)) are a coiled coil. Disordered regions lie at residues 485-512 (EQEKTEEPEEDDGWESASLSDDDEDGEW) and 606-689 (KPKS…RLMK). The segment covering 668–681 (SFRDKQIALRDSLL) has biased composition (basic and acidic residues).

The protein belongs to the SDA1 family.

Its subcellular location is the nucleus. The protein resides in the nucleolus. Required for 60S pre-ribosomal subunits export to the cytoplasm. The chain is Protein SDA1 homolog (sdad1) from Xenopus tropicalis (Western clawed frog).